Here is a 271-residue protein sequence, read N- to C-terminus: tRNA pseudouridine synthase A (271 aa).

The Nucleophile role is filled by Asp51. Tyr109 serves as a coordination point for substrate.

Belongs to the tRNA pseudouridine synthase TruA family. In terms of assembly, homodimer.

It carries out the reaction uridine(38/39/40) in tRNA = pseudouridine(38/39/40) in tRNA. In terms of biological role, formation of pseudouridine at positions 38, 39 and 40 in the anticodon stem and loop of transfer RNAs. In Methylococcus capsulatus (strain ATCC 33009 / NCIMB 11132 / Bath), this protein is tRNA pseudouridine synthase A.